We begin with the raw amino-acid sequence, 67 residues long: Protein AaeX (67 aa).

The next 2 membrane-spanning stretches (helical) occupy residues 3–23 (LFPVIVVFGLSFPPIFFELLL) and 43–63 (FVWHPALFNTALYCCLFYLIS).

Belongs to the AaeX family.

It localises to the cell membrane. This is Protein AaeX from Escherichia coli O1:K1 / APEC.